The chain runs to 301 residues: tRNA dimethylallyltransferase 2 (301 aa).

ATP is bound at residue 11 to 18 (GATASGKT). Residue 13–18 (TASGKT) participates in substrate binding. The tract at residues 36–39 (DSRQ) is interaction with substrate tRNA.

It belongs to the IPP transferase family. In terms of assembly, monomer. The cofactor is Mg(2+).

It catalyses the reaction adenosine(37) in tRNA + dimethylallyl diphosphate = N(6)-dimethylallyladenosine(37) in tRNA + diphosphate. Catalyzes the transfer of a dimethylallyl group onto the adenine at position 37 in tRNAs that read codons beginning with uridine, leading to the formation of N6-(dimethylallyl)adenosine (i(6)A). The polypeptide is tRNA dimethylallyltransferase 2 (Shewanella sediminis (strain HAW-EB3)).